The primary structure comprises 109 residues: Transcription initiation factor IIA subunit 2 (109 aa).

The protein belongs to the TFIIA subunit 2 family. As to quaternary structure, TFIIA is a heterodimer of the large unprocessed subunit 1 and a small subunit gamma. It was originally believed to be a heterotrimer of an alpha (p35), a beta (p19) and a gamma subunit (p12). Interacts with NCOA6 general coactivator. TFIIA forms a complex with TBP. Interacts with HSF1 (via transactivation domain). Part of TBP-based Pol II pre-initiation complex (PIC), in which Pol II core assembles with general transcription factors and other specific initiation factors including GTF2E1, GTF2E2, GTF2F1, GTF2F2, TCEA1, ERCC2, ERCC3, GTF2H2, GTF2H3, GTF2H4, GTF2H5, GTF2A1, GTF2A2, GTF2B and TBP; this large multi-subunit PIC complex mediates DNA unwinding and targets Pol II core to the transcription start site where the first phosphodiester bond forms. In terms of assembly, (Microbial infection) Interacts with SV40 Large T antigen.

Its subcellular location is the nucleus. Functionally, TFIIA is a component of the transcription machinery of RNA polymerase II and plays an important role in transcriptional activation. TFIIA in a complex with TBP mediates transcriptional activity. In Homo sapiens (Human), this protein is Transcription initiation factor IIA subunit 2 (GTF2A2).